A 351-amino-acid chain; its full sequence is Protein Wnt-4 (351 aa).

An N-terminal signal peptide occupies residues 1 to 22 (MTPEYFLRSLLMMILAVFSANA). Intrachain disulfides connect Cys-78–Cys-89, Cys-128–Cys-136, Cys-138–Cys-155, Cys-206–Cys-220, Cys-208–Cys-215, Cys-280–Cys-311, Cys-296–Cys-306, Cys-310–Cys-350, Cys-326–Cys-341, Cys-328–Cys-338, and Cys-333–Cys-334. Asn-88 carries N-linked (GlcNAc...) asparagine glycosylation. A lipid anchor (O-palmitoleoyl serine; by PORCN) is attached at Ser-212. A glycan (N-linked (GlcNAc...) asparagine) is linked at Asn-297.

The protein belongs to the Wnt family. Palmitoleoylation is required for efficient binding to frizzled receptors. Depalmitoleoylation leads to Wnt signaling pathway inhibition. As to expression, expressed in the brain and floor plate. In the developing pronephros, expressed in the proximal tubules and nephrostomes but absent from the pronephric duct.

It localises to the secreted. It is found in the extracellular space. Its subcellular location is the extracellular matrix. Ligand for members of the frizzled family of seven transmembrane receptors. Plays an important role in embryonic kidney development. Acts downstream of Notch signaling during pronephric kidney development. During early pronephros development, patterns the proximal pronephric anlagen to promote glomus and nephrostome formation. Also required later in pronephros development for tubulogenesis. The polypeptide is Protein Wnt-4 (wnt4) (Xenopus laevis (African clawed frog)).